Consider the following 252-residue polypeptide: Triosephosphate isomerase (252 aa).

9-11 is a substrate binding site; the sequence is NWK. Histidine 96 functions as the Electrophile in the catalytic mechanism. The active-site Proton acceptor is glutamate 166. Substrate is bound by residues glycine 172, serine 212, and 233–234; that span reads GG.

It belongs to the triosephosphate isomerase family. Homodimer.

Its subcellular location is the cytoplasm. The catalysed reaction is D-glyceraldehyde 3-phosphate = dihydroxyacetone phosphate. Its pathway is carbohydrate biosynthesis; gluconeogenesis. The protein operates within carbohydrate degradation; glycolysis; D-glyceraldehyde 3-phosphate from glycerone phosphate: step 1/1. Its function is as follows. Involved in the gluconeogenesis. Catalyzes stereospecifically the conversion of dihydroxyacetone phosphate (DHAP) to D-glyceraldehyde-3-phosphate (G3P). This Prosthecochloris aestuarii (strain DSM 271 / SK 413) protein is Triosephosphate isomerase.